The primary structure comprises 176 residues: Disulfide bond formation protein B (176 aa).

Residues 1–14 (MLQFLNRCSRGRGA) lie on the Cytoplasmic side of the membrane. Residues 15–31 (WLLMALTAFLLELTALY) traverse the membrane as a helical segment. The Periplasmic segment spans residues 32–49 (FQHIMLLQPCVMCIYERV). Cysteine 41 and cysteine 44 form a disulfide bridge. A helical membrane pass occupies residues 50-65 (ALFGILGASLLGAIAP). At 66-71 (RSPLRY) the chain is on the cytoplasmic side. Residues 72–89 (LAIAVWIYSAWKGVQLAW) traverse the membrane as a helical segment. The Periplasmic segment spans residues 90-144 (AHTMLQLNPSPFNTCDFFVNFPSWLPLDKWLPAVFAASGDCSERQWQFMSLEMPQ). A disulfide bond links cysteine 104 and cysteine 130. Residues 145 to 163 (WLVGIFAAYLVIAVLVLIS) traverse the membrane as a helical segment. The Cytoplasmic segment spans residues 164–176 (QFVKPKRRDLFGR).

This sequence belongs to the DsbB family.

It localises to the cell inner membrane. In terms of biological role, required for disulfide bond formation in some periplasmic proteins. Acts by oxidizing the DsbA protein. This chain is Disulfide bond formation protein B, found in Yersinia pestis bv. Antiqua (strain Nepal516).